The sequence spans 449 residues: Tubulin alpha-1C chain (449 aa).

The short motif at M1–C4 is the MREC motif element. GTP is bound at residue Q11. N6-acetyllysine is present on K40. GTP is bound by residues E71, S140, G144, T145, T179, N206, and N228. Position 71 (E71) interacts with Mg(2+). E254 is a catalytic residue. Y282 is modified (3'-nitrotyrosine). Y432 is modified (phosphotyrosine). S439 bears the Phosphoserine mark. Y449 is subject to 3'-nitrotyrosine.

Belongs to the tubulin family. Dimer of alpha and beta chains. A typical microtubule is a hollow water-filled tube with an outer diameter of 25 nm and an inner diameter of 15 nM. Alpha-beta heterodimers associate head-to-tail to form protofilaments running lengthwise along the microtubule wall with the beta-tubulin subunit facing the microtubule plus end conferring a structural polarity. Microtubules usually have 13 protofilaments but different protofilament numbers can be found in some organisms and specialized cells. Requires Mg(2+) as cofactor. Post-translationally, some glutamate residues at the C-terminus are polyglycylated, resulting in polyglycine chains on the gamma-carboxyl group. Glycylation is mainly limited to tubulin incorporated into axonemes (cilia and flagella) whereas glutamylation is prevalent in neuronal cells, centrioles, axonemes, and the mitotic spindle. Both modifications can coexist on the same protein on adjacent residues, and lowering polyglycylation levels increases polyglutamylation, and reciprocally. Cilia and flagella glycylation is required for their stability and maintenance. Flagella glycylation controls sperm motility. Some glutamate residues at the C-terminus are polyglutamylated, resulting in polyglutamate chains on the gamma-carboxyl group. Polyglutamylation plays a key role in microtubule severing by spastin (SPAST). SPAST preferentially recognizes and acts on microtubules decorated with short polyglutamate tails: severing activity by SPAST increases as the number of glutamates per tubulin rises from one to eight, but decreases beyond this glutamylation threshold. Glutamylation is also involved in cilia motility. In terms of processing, acetylation of alpha chains at Lys-40 is located inside the microtubule lumen. This modification has been correlated with increased microtubule stability, intracellular transport and ciliary assembly. Post-translationally, methylation of alpha chains at Lys-40 is found in mitotic microtubules and is required for normal mitosis and cytokinesis contributing to genomic stability. Nitration of Tyr-449 is irreversible and interferes with normal dynein intracellular distribution. In terms of processing, undergoes a tyrosination/detyrosination cycle, the cyclic removal and re-addition of a C-terminal tyrosine residue by the enzymes tubulin tyrosine carboxypeptidase (MATCAP1, VASH1 or VASH2) and tubulin tyrosine ligase (TTL), respectively. Post-translationally, tyrosination promotes microtubule interaction with CAP-Gly domain-containing proteins such as CLIP1, CLIP2 and DCTN1. Tyrosination regulates the initiation of dynein-dynactin motility via interaction with DCTN1, which brings the dynein-dynactin complex into contact with microtubules. In neurons, tyrosinated tubulins mediate the initiation of retrograde vesicle transport. Detyrosination is involved in metaphase plate congression by guiding chromosomes during mitosis: detyrosination promotes interaction with CENPE, promoting pole-proximal transport of chromosomes toward the equator. Detyrosination increases microtubules-dependent mechanotransduction in dystrophic cardiac and skeletal muscle. In cardiomyocytes, detyrosinated microtubules are required to resist to contractile compression during contraction: detyrosination promotes association with desmin (DES) at force-generating sarcomeres, leading to buckled microtubules and mechanical resistance to contraction.

It localises to the cytoplasm. The protein localises to the cytoskeleton. It carries out the reaction GTP + H2O = GDP + phosphate + H(+). Functionally, tubulin is the major constituent of microtubules, a cylinder consisting of laterally associated linear protofilaments composed of alpha- and beta-tubulin heterodimers. Microtubules grow by the addition of GTP-tubulin dimers to the microtubule end, where a stabilizing cap forms. Below the cap, tubulin dimers are in GDP-bound state, owing to GTPase activity of alpha-tubulin. The chain is Tubulin alpha-1C chain (Tuba1c) from Rattus norvegicus (Rat).